Reading from the N-terminus, the 111-residue chain is uncharacterized protein (111 aa).

Belongs to the asfivirus E111R family.

This is an uncharacterized protein from African swine fever virus (isolate Pig/Kenya/KEN-50/1950) (ASFV).